A 120-amino-acid chain; its full sequence is Large ribosomal subunit protein bL19 (120 aa).

Belongs to the bacterial ribosomal protein bL19 family.

Its function is as follows. This protein is located at the 30S-50S ribosomal subunit interface and may play a role in the structure and function of the aminoacyl-tRNA binding site. The protein is Large ribosomal subunit protein bL19 of Crocosphaera subtropica (strain ATCC 51142 / BH68) (Cyanothece sp. (strain ATCC 51142)).